A 193-amino-acid chain; its full sequence is Imidazoleglycerol-phosphate dehydratase (193 aa).

The protein belongs to the imidazoleglycerol-phosphate dehydratase family.

It is found in the cytoplasm. The enzyme catalyses D-erythro-1-(imidazol-4-yl)glycerol 3-phosphate = 3-(imidazol-4-yl)-2-oxopropyl phosphate + H2O. It functions in the pathway amino-acid biosynthesis; L-histidine biosynthesis; L-histidine from 5-phospho-alpha-D-ribose 1-diphosphate: step 6/9. The polypeptide is Imidazoleglycerol-phosphate dehydratase (Sulfolobus acidocaldarius (strain ATCC 33909 / DSM 639 / JCM 8929 / NBRC 15157 / NCIMB 11770)).